The sequence spans 314 residues: Olfactory receptor 1E1 (314 aa).

Residues 1-25 (MMGQNQTSISDFLLLGLPIQPEQQN) are Extracellular-facing. An N-linked (GlcNAc...) asparagine glycan is attached at N5. A helical membrane pass occupies residues 26 to 49 (LCYALFLAMYLTTLLGNLLIIVLI). Residues 50–57 (RLDSHLHT) lie on the Cytoplasmic side of the membrane. A helical transmembrane segment spans residues 58–79 (PMYLFLSNLSFSDLCFSSVTIP). At 80-100 (KLLQNMQNQDPSIPYADCLTQ) the chain is on the extracellular side. Residues C97 and C189 are joined by a disulfide bond. The helical transmembrane segment at 101 to 120 (MYFFLLFGDLESFLLVAMAY) threads the bilayer. Over 121–139 (DRYVAICFPLHYTAIMSPM) the chain is Cytoplasmic. The helical transmembrane segment at 140–158 (LCLSVVALSWVLTTFHAML) threads the bilayer. Topologically, residues 159–195 (HTLLMARLCFCADNVIPHFFCDMSALLKLACSDTRVN) are extracellular. The chain crosses the membrane as a helical span at residues 196–219 (EWVIFIMGGLILVIPFLLILGSYA). Residues 220–236 (RIVSSILKVPSSKGICK) lie on the Cytoplasmic side of the membrane. Residues 237-259 (ALSTCGSHLSVVSLFYGTVIGLY) form a helical membrane-spanning segment. Residues 260-272 (LCPSANSSTLKDT) lie on the Extracellular side of the membrane. Residues 273–292 (VMAMIYTVVTPMLNPFIYSL) form a helical membrane-spanning segment. The Cytoplasmic segment spans residues 293–314 (RNRDMKGALSRVIHQKKTFFSL).

This sequence belongs to the G-protein coupled receptor 1 family.

Its subcellular location is the cell membrane. In terms of biological role, odorant receptor. The polypeptide is Olfactory receptor 1E1 (OR1E1) (Pan troglodytes (Chimpanzee)).